A 71-amino-acid polypeptide reads, in one-letter code: Disintegrin halysin (71 aa).

Positions 1 to 71 constitute a Disintegrin domain; it reads EAGEECDCGS…ISAGCPRNPF (71 aa). Cystine bridges form between cysteine 6–cysteine 21, cysteine 8–cysteine 16, cysteine 15–cysteine 38, cysteine 29–cysteine 35, cysteine 34–cysteine 59, and cysteine 47–cysteine 66. Residues 51 to 53 carry the Cell attachment site motif; that stretch reads RGD.

It belongs to the venom metalloproteinase (M12B) family. P-II subfamily. P-IIa sub-subfamily. In terms of assembly, monomer. Expressed by the venom gland.

The protein localises to the secreted. In terms of biological role, inhibits fibrinogen interaction with platelets. Acts by binding to alpha-IIb/beta-3 (ITGA2B/ITGB3) on the platelet surface and inhibits aggregation induced by ADP, thrombin, platelet-activating factor and collagen. The protein is Disintegrin halysin of Gloydius blomhoffii (Mamushi).